The chain runs to 354 residues: DnaJ homolog shv (354 aa).

Residues 1 to 22 (MQLIKCLVIIQLSLLLVEESFA) form the signal peptide. Residues 25 to 90 (DFYKILNVKK…DKRKTYDRCG (66 aa)) form the J domain. 2 N-linked (GlcNAc...) asparagine glycosylation sites follow: N260 and N312.

As to expression, in the testes, detected at low levels in somatic hub cells, cyst stem cells and the apical tip (at protein level). Levels in the testes decrease with age (at protein level). Expressed at low levels in hub cells, cyst stem cells and germline stem cells, and at high levels in spermatocytes and cyst cells.

The protein localises to the nucleus. The protein resides in the cell membrane. It localises to the secreted. Its function is as follows. Maintains stem cell niche architecture in the testes. Activates an extracellular integrin beta-PS pathway which regulates DE-cadherin (shg) levels in somatic hub cells, and is essential for maintaining the number of germline stem cells and the structure and localization of hub cells. The polypeptide is DnaJ homolog shv (Drosophila melanogaster (Fruit fly)).